The following is a 190-amino-acid chain: Corticoliberin (190 aa).

Positions 1 to 24 (MRLPLLVSVGVLLVALLPSPPCRA) are cleaved as a signal peptide. Residues 25–147 (LLSRGPIPGA…QEAPAARKRR (123 aa)) constitute a propeptide that is removed on maturation. 2 disordered regions span residues 33-53 (GARQ…LPQP) and 115-151 (PRRP…SQEP). The segment covering 41–53 (PQPLSFFQPLPQP) has biased composition (low complexity). Residue A188 is modified to Alanine amide.

It belongs to the sauvagine/corticotropin-releasing factor/urotensin I family. As to quaternary structure, interacts (via C-terminus) with CRFR1 (via N-terminal extracellular domain). In terms of tissue distribution, produced by the hypothalamus.

It is found in the secreted. Hormone regulating the release of corticotropin from pituitary gland. Induces NLRP6 in intestinal epithelial cells, hence may influence gut microbiota profile. In Ovis aries (Sheep), this protein is Corticoliberin (CRH).